Consider the following 897-residue polypeptide: DNA polymerase I (897 aa).

The 317-residue stretch at 1–317 (MEQPVIKEGT…ILDNTPALDN (317 aa)) folds into the 5'-3' exonuclease domain. One can recognise a 3'-5' exonuclease domain in the interval 318–494 (APKKSRMIVL…RLCEYFEKGG (177 aa)). Positions 498-896 (DLLTLARDIE…FIAKRWNELK (399 aa)) are polymerase.

The protein belongs to the DNA polymerase type-A family. As to quaternary structure, single-chain monomer with multiple functions.

It catalyses the reaction DNA(n) + a 2'-deoxyribonucleoside 5'-triphosphate = DNA(n+1) + diphosphate. Its function is as follows. In addition to polymerase activity, this DNA polymerase exhibits 3'-5' and 5'-3' exonuclease activity. This is DNA polymerase I (polA) from Helicobacter pylori (strain J99 / ATCC 700824) (Campylobacter pylori J99).